The chain runs to 88 residues: Small ribosomal subunit protein bS20 (88 aa).

Residues 1-20 (MANIKQQKKRNKTNEKRRLR) are disordered.

Belongs to the bacterial ribosomal protein bS20 family.

In terms of biological role, binds directly to 16S ribosomal RNA. This Phytoplasma australiense protein is Small ribosomal subunit protein bS20.